A 1325-amino-acid polypeptide reads, in one-letter code: uncharacterized protein (1325 aa).

An N-terminal signal peptide occupies residues 1 to 27 (MHTFTRKVKWPFMFTAIGLTFGIVAVA). The N-palmitoyl cysteine moiety is linked to residue C28. Residue C28 is the site of S-diacylglycerol cysteine attachment. 2 disordered regions span residues 379 to 402 (RAASSSSEGTIQLKTASDGGGTTQ) and 430 to 464 (NTNANQTGGGGSGGGGGTSTGSSTGSSTETTTGNS). Residues 436 to 448 (TGGGGSGGGGGTS) are compositionally biased toward gly residues. Residues 449 to 464 (TGSSTGSSTETTTGNS) show a composition bias toward low complexity.

Belongs to the MG307/MG309/MG338 family.

The protein localises to the cell membrane. This is an uncharacterized protein from Mycoplasma pneumoniae (strain ATCC 29342 / M129 / Subtype 1) (Mycoplasmoides pneumoniae).